The chain runs to 372 residues: Forkhead box protein F1-B (372 aa).

The segment at 1–51 (MTAEIQQPPSQPPAQSSPMSAATDKHGGQPSAMESASCATKTKKTNAGIRR) is disordered. Residues 13-22 (PAQSSPMSAA) show a composition bias toward low complexity. The segment at residues 54 to 148 (KPPYSYIALI…EEGSFRRRPR (95 aa)) is a DNA-binding region (fork-head).

At the late gastrula stage, expressed in the presumptive ventrolateral mesoderm. During neurulation and tailbud stages, expressed in the lateral plate mesoderm and in the neural crest-derived structures of the head and branchial arches. During tailbud stages, expressed in the pronephros and pronephros ducts and in cells that migrate from the dorsolateral plate to the ventral region of the embryo (with the notable exception of the heart). These cells may represent hematopoietic or endothelial progenitor cells.

It localises to the nucleus. Functionally, probable transcription factor. Required for smooth muscle (visceral mesoderm) differentiation during gut development. Also required for normal proliferation of the lateral plate mesoderm. Acts as a downstream mediator of bmp4-signaling. In Xenopus laevis (African clawed frog), this protein is Forkhead box protein F1-B (foxf1-b).